A 239-amino-acid polypeptide reads, in one-letter code: Retrotransposon Gag-like protein 6 (239 aa).

The stretch at 29-69 (LTSLRLTNSALRREASTLRAEKANLTNMLESVMAELTLLRT) forms a coiled coil. Polar residues predominate over residues 82–94 (PISSITSNGTRPM). Disordered regions lie at residues 82–106 (PISS…EPFS) and 214–239 (TGPC…ARNL). A compositionally biased stretch (low complexity) spans 228-239 (PAPALPARARNL).

The protein belongs to the LDOC1 family.

The protein is Retrotransposon Gag-like protein 6 of Homo sapiens (Human).